Here is a 62-residue protein sequence, read N- to C-terminus: DNA-directed RNA polymerase subunit Rpo10 (62 aa).

Positions 6, 9, 43, and 44 each coordinate Zn(2+).

The protein belongs to the archaeal Rpo10/eukaryotic RPB10 RNA polymerase subunit family. As to quaternary structure, part of the RNA polymerase complex. Zn(2+) is required as a cofactor.

The protein resides in the cytoplasm. The catalysed reaction is RNA(n) + a ribonucleoside 5'-triphosphate = RNA(n+1) + diphosphate. Functionally, DNA-dependent RNA polymerase (RNAP) catalyzes the transcription of DNA into RNA using the four ribonucleoside triphosphates as substrates. In Methanocorpusculum labreanum (strain ATCC 43576 / DSM 4855 / Z), this protein is DNA-directed RNA polymerase subunit Rpo10.